A 605-amino-acid polypeptide reads, in one-letter code: Capsid scaffolding protein (605 aa).

Catalysis depends on charge relay system residues His48, Ser116, and His139. Positions 235 to 275 are disordered; sequence ASDAPDLQKPDKALQSPPPASTDPDTMLSGNAGEGATACGG. The interval 281–300 is interaction with pAP; sequence QDLISVPRNTFMTLLQTNLD. Disordered stretches follow at residues 403–432 and 489–588; these read DYVP…PGED and PHQS…KSVS. A Nuclear localization signal motif is present at residues 410–416; sequence RSNKRKR. Residues 568-579 are compositionally biased toward polar residues; it reads ASASGVAQSKEP. Positions 585–605 are interaction with major capsid protein; the sequence is KSVSAHLKSIFCEELLNKRVA.

It belongs to the herpesviridae capsid scaffolding protein family. In terms of assembly, homomultimer. Interacts with major capsid protein. Exists in a monomer-dimer equilibrium with the dimer being the active species. Post-translationally, capsid scaffolding protein is cleaved by assemblin after formation of the spherical procapsid. As a result, the capsid obtains its mature, icosahedral shape. Cleavages occur at two or more sites: release (R-site) and maturation (M-site).

The protein localises to the host cytoplasm. It is found in the host nucleus. The catalysed reaction is Cleaves -Ala-|-Ser- and -Ala-|-Ala- bonds in the scaffold protein.. Acts as a scaffold protein by binding major capsid protein in the cytoplasm, inducing the nuclear localization of both proteins. Multimerizes in the nucleus such as major capsid protein forms the icosahedral T=16 capsid. Autocatalytic cleavage releases the assembly protein, and subsequently abolishes interaction with major capsid protein. Cleavages products are evicted from the capsid before or during DNA packaging. Functionally, protease that plays an essential role in virion assembly within the nucleus. Catalyzes the cleavage of the assembly protein after formation of the spherical procapsid. By that cleavage, the capsid matures and gains its icosahedral shape. The cleavage sites seem to include -Ala-Ser-, -Ala-Ala-, as well as Ala-Thr bonds. Assemblin and cleavages products are evicted from the capsid before or during DNA packaging. In terms of biological role, plays a major role in capsid assembly. Acts as a scaffold protein by binding major capsid protein. Multimerizes in the nucleus such as major capsid protein forms the icosahedral T=16 capsid. Cleaved by assemblin after capsid completion. The cleavages products are evicted from the capsid before or during DNA packaging. The polypeptide is Capsid scaffolding protein (Epstein-Barr virus (strain AG876) (HHV-4)).